The sequence spans 155 residues: Endoribonuclease YbeY (155 aa).

Zn(2+)-binding residues include His114, His118, and His124.

The protein belongs to the endoribonuclease YbeY family. Requires Zn(2+) as cofactor.

The protein resides in the cytoplasm. Functionally, single strand-specific metallo-endoribonuclease involved in late-stage 70S ribosome quality control and in maturation of the 3' terminus of the 16S rRNA. This chain is Endoribonuclease YbeY, found in Shigella dysenteriae serotype 1 (strain Sd197).